The chain runs to 377 residues: METFVYLLFMVAVGALIGGVTNFIAIVMLFRPYEPMYVFGKRLPFTPGLIPKRRRELAEQLGKTVVEHLVTPEGLRRKLMDPSFTAEMAEWGREWLRKWLARKETPAELLERLGIRSPAERLEAMAAEQAERAYERWSETWRLRPIRDVLPAELKQTMEARVESLAGYLADRTLDYFRSEEGKQQISSMIERFFQERGMVGNMLQMLLGNVNFVDKVQAELGKFLRHAGTREVLSRLLWTEWNKWLDYPLATVEEMIGRRRIDEAVRSAARRLVQSGSWLHRPLDELIAPYEQPLFDRLIPQAAATVSCLLSDKIEAIVAQLGLADIVRDQVESFSLRRLEAIILSIARRELKMITYLGALLGGLIGAVQGVIGLWL.

2 consecutive transmembrane segments (helical) span residues 7–27 and 357–377; these read LLFMVAVGALIGGVTNFIAIV and YLGALLGGLIGAVQGVIGLWL.

This sequence belongs to the UPF0754 family.

Its subcellular location is the cell membrane. The protein is UPF0754 membrane protein GK0639 of Geobacillus kaustophilus (strain HTA426).